Consider the following 179-residue polypeptide: UPF0302 protein BPUM_1989 (179 aa).

The protein belongs to the UPF0302 family.

The sequence is that of UPF0302 protein BPUM_1989 from Bacillus pumilus (strain SAFR-032).